A 444-amino-acid polypeptide reads, in one-letter code: Acyl-CoA 6-desaturase (444 aa).

Residues 1 to 130 are Cytoplasmic-facing; it reads MGKGGNQGEG…EDMNLFKTNH (130 aa). Positions 18-95 constitute a Cytochrome b5 heme-binding domain; that stretch reads MPTFRWEEIQ…LKPLLIGELA (78 aa). A helical membrane pass occupies residues 131-151; the sequence is LFFFLLLSHIIVMESIAWFIL. The Lumenal segment spans residues 152 to 157; it reads SYFGNG. A helical transmembrane segment spans residues 158-178; it reads WIPTVITAFVLATSQAQAGWL. Residues 179–264 lie on the Cytoplasmic side of the membrane; the sequence is QHDYGHLSVY…KYLPYNHQHE (86 aa). Residues 180-184 carry the Histidine box-1 motif; sequence HDYGH. A Histidine box-2 motif is present at residues 217–221; sequence HFQHH. Residues 265 to 285 form a helical membrane-spanning segment; the sequence is YFFLIGPPLLIPMYFQYQIIM. The Lumenal portion of the chain corresponds to 286-305; sequence TMIRRRDWVDLAWAISYYAR. A helical transmembrane segment spans residues 306-326; it reads FFYTYIPFYGILGALVFLNFI. The Cytoplasmic segment spans residues 327–444; it reads RFLESHWFVW…ELWLDAYLHK (118 aa). Residues 382–386 carry the Histidine box-3 motif; the sequence is QIEHH.

This sequence belongs to the fatty acid desaturase type 1 family. As to expression, expressed in the liver and brain (at protein level). Highest activity is found in the liver and adrenals followed by the testes and other organs, absent in adipose tissue.

The protein resides in the endoplasmic reticulum membrane. The protein localises to the microsome membrane. The enzyme catalyses (9Z,12Z)-octadecadienoyl-CoA + 2 Fe(II)-[cytochrome b5] + O2 + 2 H(+) = (6Z,9Z,12Z)-octadecatrienoyl-CoA + 2 Fe(III)-[cytochrome b5] + 2 H2O. It catalyses the reaction (9Z,12Z,15Z)-octadecatrienoyl-CoA + 2 Fe(II)-[cytochrome b5] + O2 + 2 H(+) = (6Z,9Z,12Z,15Z)-octadecatetraenoyl-CoA + 2 Fe(III)-[cytochrome b5] + 2 H2O. The catalysed reaction is (9Z,12Z,15Z,18Z,21Z)-tetracosapentaenoyl-CoA + 2 Fe(II)-[cytochrome b5] + O2 + 2 H(+) = (6Z,9Z,12Z,15Z,18Z,21Z)-tetracosahexaenoyl-CoA + 2 Fe(III)-[cytochrome b5] + 2 H2O. It carries out the reaction (11E)-octadecenoyl-CoA + 2 Fe(II)-[cytochrome b5] + O2 + 2 H(+) = (6Z,11E)-octadecadienoyl-CoA + 2 Fe(III)-[cytochrome b5] + 2 H2O. The enzyme catalyses (11Z,14Z)-eicosadienoyl-CoA + 2 Fe(II)-[cytochrome b5] + O2 + 2 H(+) = (8Z,11Z,14Z)-eicosatrienoyl-CoA + 2 Fe(III)-[cytochrome b5] + 2 H2O. It catalyses the reaction (11Z,14Z,17Z)-eicosatrienoyl-CoA + 2 Fe(II)-[cytochrome b5] + O2 + 2 H(+) = (8Z,11Z,14Z,17Z)-eicosatetraenoyl-CoA + 2 Fe(III)-[cytochrome b5] + 2 H2O. The protein operates within lipid metabolism; polyunsaturated fatty acid biosynthesis. Its function is as follows. Involved in the biosynthesis of highly unsaturated fatty acids (HUFA) from the essential polyunsaturated fatty acids (PUFA) linoleic acid (LA) (18:2n-6) and alpha-linolenic acid (ALA) (18:3n-3) precursors, acting as a fatty acyl-coenzyme A (CoA) desaturase that introduces a cis double bond at carbon 6 of the fatty acyl chain. Catalyzes the first and rate limiting step in this pathway which is the desaturation of LA (18:2n-6) and ALA (18:3n-3) into gamma-linoleate (GLA) (18:3n-6) and stearidonate (18:4n-3), respectively. Subsequently, in the biosynthetic pathway of HUFA n-3 series, it desaturates tetracosapentaenoate (24:5n-3) to tetracosahexaenoate (24:6n-3), which is then converted to docosahexaenoate (DHA)(22:6n-3), an important lipid for nervous system function. It can also desaturate (11E)-octadecenoate (trans-vaccenoate) at carbon 6 generating (6Z,11E)-octadecadienoate. In addition to Delta-6 activity, this enzyme exhibits Delta-8 activity with slight biases toward n-3 fatty acyl-CoA substrates. The chain is Acyl-CoA 6-desaturase (Fads2) from Rattus norvegicus (Rat).